A 1003-amino-acid polypeptide reads, in one-letter code: Translation initiation factor IF-2 (1003 aa).

The segment at 36 to 392 (SSTIEPPVVK…RQKRNEYESM (357 aa)) is disordered. Low complexity predominate over residues 62-151 (AAKPAAAKPA…PKPAAAAKPA (90 aa)). 2 stretches are compositionally biased toward pro residues: residues 178 to 190 (DGMPRPMGKPAPK) and 213 to 230 (PRPGGGPRPGGGPRPGGG). 2 stretches are compositionally biased toward gly residues: residues 231–243 (PRPQGQGRPGGQR) and 255–271 (GNRGGQRQGAGAGGPRP). Over residues 273–286 (GGPRPQGGSRPQGG) the composition is skewed to low complexity. Residues 329-372 (GKGGRGGQAGGGAGGGFNRGGGTGGGAGRGGRRGGTAGAFGRPG) are compositionally biased toward gly residues. Over residues 376–385 (RRGRKSKRQK) the composition is skewed to basic residues. A tr-type G domain is found at 498–670 (KRPPVVTVMG…VCLTADAELD (173 aa)). Positions 507–514 (GHVDHGKT) are G1. Position 507-514 (507-514 (GHVDHGKT)) interacts with GTP. The interval 532-536 (GITQG) is G2. The tract at residues 557–560 (DTPG) is G3. GTP-binding positions include 557–561 (DTPGH) and 611–614 (NKID). Residues 611-614 (NKID) are G4. Residues 647 to 649 (SAK) form a G5 region.

It belongs to the TRAFAC class translation factor GTPase superfamily. Classic translation factor GTPase family. IF-2 subfamily.

It is found in the cytoplasm. Its function is as follows. One of the essential components for the initiation of protein synthesis. Protects formylmethionyl-tRNA from spontaneous hydrolysis and promotes its binding to the 30S ribosomal subunits. Also involved in the hydrolysis of GTP during the formation of the 70S ribosomal complex. The sequence is that of Translation initiation factor IF-2 from Corynebacterium glutamicum (strain R).